The chain runs to 264 residues: Glutamate 5-kinase (264 aa).

Residue Lys-9 participates in ATP binding. Substrate contacts are provided by Ser-47, Asp-132, and Asn-144. ATP contacts are provided by residues 164 to 165 (SD) and 206 to 212 (TGGIVTK).

It belongs to the glutamate 5-kinase family.

Its subcellular location is the cytoplasm. It carries out the reaction L-glutamate + ATP = L-glutamyl 5-phosphate + ADP. Its pathway is amino-acid biosynthesis; L-proline biosynthesis; L-glutamate 5-semialdehyde from L-glutamate: step 1/2. Catalyzes the transfer of a phosphate group to glutamate to form L-glutamate 5-phosphate. This is Glutamate 5-kinase from Helicobacter hepaticus (strain ATCC 51449 / 3B1).